Here is a 487-residue protein sequence, read N- to C-terminus: b(0,+)-type amino acid transporter 1 (487 aa).

A compositionally biased stretch (basic and acidic residues) spans 1–20 (MEETSPRRRREDEKSVHSTE). The tract at residues 1-23 (MEETSPRRRREDEKSVHSTEPKT) is disordered. Topologically, residues 1 to 31 (MEETSPRRRREDEKSVHSTEPKTTSLQKEVG) are cytoplasmic. S18 bears the Phosphoserine mark. The helical transmembrane segment at 32–55 (LLSGICIIVGTIIGSGIFISPKSV) threads the bilayer. 43–47 (IIGSG) contacts L-arginine. At 56 to 62 (LANTESV) the chain is on the extracellular side. Residues 63 to 84 (GPCLIIWAACGVLATLGALCFA) form a helical membrane-spanning segment. At 85–110 (ELGTMITKSGGEYPYLMEAFGPIPAY) the chain is on the cytoplasmic side. Residues 111–137 (LFSWTSLIVMKPSSFAIICLSFSEYVC) form a helical membrane-spanning segment. The Extracellular segment spans residues 138–147 (AAFYLGCRPP). 2 helical membrane-spanning segments follow: residues 148–169 (AVVVKLLAAAAILLITTVNALS) and 170–193 (VRLGSYVQNVFTAAKLVIVAIIII). Residues 194-217 (SGLVLLAQGNVKNFQNSFEGSQTS) lie on the Extracellular side of the membrane. A helical transmembrane segment spans residues 218-238 (VGSISLAFYNGLWAYDGWNQL). Position 233 (D233) interacts with L-arginine. The Cytoplasmic segment spans residues 239-251 (NYITEELRNPYRN). Residues 252–274 (LPMAIVIGIPLVTVCYILMNIAY) traverse the membrane as a helical segment. Residues 275-302 (FTVMTPTELLQSQAVAVTFGDRVLYPAS) lie on the Extracellular side of the membrane. Residues 303-325 (WVVPLFVAFSTIGAANGTCFTAG) form a helical membrane-spanning segment. Residues 326–351 (RLIYVAGREGHMLKVLSYISVKRLTP) lie on the Cytoplasmic side of the membrane. The next 2 helical transmembrane spans lie at 352 to 370 (APALVFYGIIAIIYIIPGD) and 371 to 391 (INSLVNYFSFAAWLFYGMTIL). The Cytoplasmic segment spans residues 392–410 (GLVVMRFTRKDLERPIKVP). A helical transmembrane segment spans residues 411–431 (IFIPIIVILVSVFLILAPIIS). Topologically, residues 432–434 (SPA) are extracellular. The chain crosses the membrane as a helical span at residues 435 to 450 (WEYLYCVLFILSGLIF). Over 451-487 (YFLFVHYKFRWAQKISRPITKHLQMLMEVVPPEKDPE) the chain is Cytoplasmic.

It belongs to the amino acid-polyamine-organocation (APC) superfamily. As to quaternary structure, disulfide-linked heterodimer composed of the catalytic light chain subunit SLC7A9 and the heavy chain subunit SLC3A1. The heterodimer is the minimal functional unit. Assembles in heterotetramers (dimers of heterodimers) and higher order oligomers; the oligomerization is mediated by SLC3A1 likely to prevent degradation and facilitate heteromer trafficking to the plasma membrane. Interacts with CAV1. As to expression, outer medulla of kidney (at protein level). Kidney and small intestine. In the kidney localized to the apical membrane of the proximal tubules.

It localises to the apical cell membrane. The enzyme catalyses L-leucine(out) + L-arginine(in) = L-leucine(in) + L-arginine(out). It carries out the reaction L-histidine(out) + L-arginine(in) = L-histidine(in) + L-arginine(out). It catalyses the reaction L-arginine(in) + L-phenylalanine(out) = L-arginine(out) + L-phenylalanine(in). The catalysed reaction is L-cysteine(out) + L-arginine(in) = L-cysteine(in) + L-arginine(out). The enzyme catalyses L-cystine(out) + L-arginine(in) = L-cystine(in) + L-arginine(out). It carries out the reaction L-lysine(out) + L-arginine(in) = L-lysine(in) + L-arginine(out). Functionally, associates with SLC3A1 to form a functional transporter complex that mediates the electrogenic exchange between cationic amino acids and neutral amino acids, with a stoichiometry of 1:1. Has system b(0,+)-like activity with high affinity for extracellular cationic amino acids and L-cystine and lower affinity for intracellular neutral amino acids. Substrate exchange is driven by high concentration of intracellular neutral amino acids and the intracellular reduction of L-cystine to L-cysteine. Required for reabsorption of L-cystine and dibasic amino acids across the brush border membrane in renal proximal tubules. This chain is b(0,+)-type amino acid transporter 1 (Slc7a9), found in Rattus norvegicus (Rat).